The sequence spans 365 residues: Histidinol-phosphate aminotransferase (365 aa).

Lys223 is modified (N6-(pyridoxal phosphate)lysine).

Belongs to the class-II pyridoxal-phosphate-dependent aminotransferase family. Histidinol-phosphate aminotransferase subfamily. Homodimer. It depends on pyridoxal 5'-phosphate as a cofactor.

It carries out the reaction L-histidinol phosphate + 2-oxoglutarate = 3-(imidazol-4-yl)-2-oxopropyl phosphate + L-glutamate. The protein operates within amino-acid biosynthesis; L-histidine biosynthesis; L-histidine from 5-phospho-alpha-D-ribose 1-diphosphate: step 7/9. This chain is Histidinol-phosphate aminotransferase, found in Brucella melitensis biotype 1 (strain ATCC 23456 / CCUG 17765 / NCTC 10094 / 16M).